Reading from the N-terminus, the 862-residue chain is Protein SEY1 (862 aa).

Residues 1-743 are Cytoplasmic-facing; it reads MASNGHFSSV…KRSAIGGITQ (743 aa). The region spanning 48 to 301 is the GB1/RHD3-type G domain; the sequence is GFNYHLISVF…IPADGFAVYA (254 aa). Residue 58 to 65 coordinates GTP; the sequence is GSQSTGKS. The stretch at 476–500 forms a coiled coil; it reads SDYKQELSLFQKDLEKISSQLRKDE. A helical membrane pass occupies residues 744–764; that stretch reads VPLYFYGLLLALGWNEIIAVL. At 765-767 the chain is on the lumenal side; sequence RNP. A helical membrane pass occupies residues 768–788; it reads IYFIFLLLIGVGAYVTFRLNL. Residues 789 to 862 are Cytoplasmic-facing; the sequence is WGPMINMAEA…TSDDDNDDDL (74 aa). Positions 818–862 are disordered; sequence SDSGRQAMAMSGRNARGTEEYEMSSNLKSKGRRTDTSDDDNDDDL.

It belongs to the TRAFAC class dynamin-like GTPase superfamily. GB1/RHD3 GTPase family. RHD3 subfamily.

Its subcellular location is the endoplasmic reticulum membrane. Functionally, cooperates with the reticulon proteins and tubule-shaping DP1 family proteins to generate and maintain the structure of the tubular endoplasmic reticulum network. Has GTPase activity, which is required for its function in ER organization. This chain is Protein SEY1, found in Arthroderma otae (strain ATCC MYA-4605 / CBS 113480) (Microsporum canis).